We begin with the raw amino-acid sequence, 286 residues long: Aquaporin PIP1-1 (286 aa).

A disordered region spans residues 1–34; that stretch reads MEGKEEDVRLGANKFSERQPIGTAAQSDKGYKEP. The Cytoplasmic portion of the chain corresponds to 1–54; that stretch reads MEGKEEDVRLGANKFSERQPIGTAAQSDKGYKEPPPAPLFEPGELTSWSFYRAG. A helical membrane pass occupies residues 55–75; sequence IAEFMATFLFLYITILTVMGV. The Extracellular segment spans residues 76-88; the sequence is VKSNSKCSTVGIQ. A helical transmembrane segment spans residues 89-109; sequence GIAWAFGGMIFALVYCTAGIS. The Cytoplasmic portion of the chain corresponds to 110–131; the sequence is GGHINPAVTFGLFLARKLSLTR. An NPA 1 motif is present at residues 114–116; the sequence is NPA. A helical transmembrane segment spans residues 132-152; the sequence is ALFYMVMQCLGAICGAGVVKG. Over 153 to 174 the chain is Extracellular; it reads YQKGLYESNGGGANVVAPGYTK. A helical transmembrane segment spans residues 175-195; sequence GDGLGAEIVGTFILVYTVFSA. Over 196-208 the chain is Cytoplasmic; it reads TDAKRNARDSHVP. Residues 209–229 form a helical membrane-spanning segment; the sequence is ILAPLPIGFAVFLVHLATIPI. Residues 230–256 lie on the Extracellular side of the membrane; the sequence is TGTGINPARSLGAAIIYNKKHAWDDHW. The short motif at 235 to 237 is the NPA 2 element; it reads NPA. A helical membrane pass occupies residues 257–277; that stretch reads IFWVGPFIGAALAAIYHQIVI. Residues 278-286 lie on the Cytoplasmic side of the membrane; that stretch reads RAIPFKSRP.

This sequence belongs to the MIP/aquaporin (TC 1.A.8) family. PIP (TC 1.A.8.11) subfamily. In terms of tissue distribution, expressed in leaves, roots, stems, flowers and fruits, with highest levels in roots.

Its subcellular location is the cell membrane. In terms of biological role, water channel required to facilitate the transport of water across cell membrane; mercury-insensitive. Promotes primary root elongation and root hair formation. Contributes to the tolerance to multiple abiotic stresses including salt (NaCl), cold and water deprivation, by modulating cytosolic K(+)/Na(+) ratio, maintaining osmotic balance, and reducing membrane injury (e.g. oxidative injury). Also regulates the expression of abscisic acid (ABA)-responsive genes during dehydration and salt stresses. This Musa acuminata (Banana) protein is Aquaporin PIP1-1.